Here is a 247-residue protein sequence, read N- to C-terminus: Triosephosphate isomerase (247 aa).

Position 9 to 11 (9 to 11 (NWK)) interacts with substrate. His-93 acts as the Electrophile in catalysis. The Proton acceptor role is filled by Glu-163. Residues Gly-169, Ser-209, and 230 to 231 (GG) contribute to the substrate site.

Belongs to the triosephosphate isomerase family. Homodimer.

Its subcellular location is the cytoplasm. The enzyme catalyses D-glyceraldehyde 3-phosphate = dihydroxyacetone phosphate. The protein operates within carbohydrate biosynthesis; gluconeogenesis. Its pathway is carbohydrate degradation; glycolysis; D-glyceraldehyde 3-phosphate from glycerone phosphate: step 1/1. Its function is as follows. Involved in the gluconeogenesis. Catalyzes stereospecifically the conversion of dihydroxyacetone phosphate (DHAP) to D-glyceraldehyde-3-phosphate (G3P). The chain is Triosephosphate isomerase from Dinoroseobacter shibae (strain DSM 16493 / NCIMB 14021 / DFL 12).